Reading from the N-terminus, the 688-residue chain is Glycine--tRNA ligase beta subunit (688 aa).

It belongs to the class-II aminoacyl-tRNA synthetase family. As to quaternary structure, tetramer of two alpha and two beta subunits.

The protein resides in the cytoplasm. It catalyses the reaction tRNA(Gly) + glycine + ATP = glycyl-tRNA(Gly) + AMP + diphosphate. The chain is Glycine--tRNA ligase beta subunit from Listeria welshimeri serovar 6b (strain ATCC 35897 / DSM 20650 / CCUG 15529 / CIP 8149 / NCTC 11857 / SLCC 5334 / V8).